The following is a 172-amino-acid chain: Small ribosomal subunit protein uS5 (172 aa).

The S5 DRBM domain maps to 17 to 80 (MREKMIAVNR…EEARRKMIKV (64 aa)).

It belongs to the universal ribosomal protein uS5 family. In terms of assembly, part of the 30S ribosomal subunit. Contacts proteins S4 and S8.

Functionally, with S4 and S12 plays an important role in translational accuracy. In terms of biological role, located at the back of the 30S subunit body where it stabilizes the conformation of the head with respect to the body. In Janthinobacterium sp. (strain Marseille) (Minibacterium massiliensis), this protein is Small ribosomal subunit protein uS5.